We begin with the raw amino-acid sequence, 334 residues long: GTP 3',8-cyclase (334 aa).

Positions 13-239 constitute a Radical SAM core domain; the sequence is KFHRKFYYLR…KVRSHHDGPA (227 aa). Arg-22 lines the GTP pocket. Residues Cys-29 and Cys-33 each contribute to the [4Fe-4S] cluster site. Tyr-35 is a binding site for S-adenosyl-L-methionine. Cys-36 is a [4Fe-4S] cluster binding site. A GTP-binding site is contributed by Arg-73. Gly-77 provides a ligand contact to S-adenosyl-L-methionine. Thr-104 is a GTP binding site. Ser-128 provides a ligand contact to S-adenosyl-L-methionine. GTP is bound at residue Lys-165. Residue Met-199 participates in S-adenosyl-L-methionine binding. Residues Cys-262 and Cys-265 each contribute to the [4Fe-4S] cluster site. 267–269 lines the GTP pocket; it reads RLR. Cys-279 contributes to the [4Fe-4S] cluster binding site.

Belongs to the radical SAM superfamily. MoaA family. In terms of assembly, monomer and homodimer. It depends on [4Fe-4S] cluster as a cofactor.

The enzyme catalyses GTP + AH2 + S-adenosyl-L-methionine = (8S)-3',8-cyclo-7,8-dihydroguanosine 5'-triphosphate + 5'-deoxyadenosine + L-methionine + A + H(+). The protein operates within cofactor biosynthesis; molybdopterin biosynthesis. Functionally, catalyzes the cyclization of GTP to (8S)-3',8-cyclo-7,8-dihydroguanosine 5'-triphosphate. This is GTP 3',8-cyclase from Vibrio parahaemolyticus serotype O3:K6 (strain RIMD 2210633).